The following is a 354-amino-acid chain: Aspartate carbamoyltransferase catalytic subunit (354 aa).

Carbamoyl phosphate is bound by residues arginine 67 and threonine 68. Lysine 95 contributes to the L-aspartate binding site. Residues arginine 117, histidine 150, and glutamine 153 each coordinate carbamoyl phosphate. Positions 190 and 261 each coordinate L-aspartate. 2 residues coordinate carbamoyl phosphate: glycine 302 and proline 303.

It belongs to the aspartate/ornithine carbamoyltransferase superfamily. ATCase family. In terms of assembly, heterododecamer (2C3:3R2) of six catalytic PyrB chains organized as two trimers (C3), and six regulatory PyrI chains organized as three dimers (R2).

The catalysed reaction is carbamoyl phosphate + L-aspartate = N-carbamoyl-L-aspartate + phosphate + H(+). It participates in pyrimidine metabolism; UMP biosynthesis via de novo pathway; (S)-dihydroorotate from bicarbonate: step 2/3. Catalyzes the condensation of carbamoyl phosphate and aspartate to form carbamoyl aspartate and inorganic phosphate, the committed step in the de novo pyrimidine nucleotide biosynthesis pathway. This chain is Aspartate carbamoyltransferase catalytic subunit, found in Synechococcus sp. (strain RCC307).